Reading from the N-terminus, the 396-residue chain is Metallophosphoesterase 1 (396 aa).

The chain crosses the membrane as a helical span at residues 28–48; that stretch reads TVVIISVLLFCEYFIYYLVLF. A divalent metal cation is bound by residues aspartate 75, aspartate 117, asparagine 155, histidine 249, histidine 303, and histidine 305. The helical transmembrane segment at 356-376 threads the bilayer; sequence TVLTMYGAAAGFLMILILVHF.

The protein belongs to the metallophosphoesterase superfamily. MPPE1 family. Interacts with GPI-anchor proteins (via the GPI portion). Interacts with TMED10. Mn(2+) is required as a cofactor.

It is found in the endoplasmic reticulum-Golgi intermediate compartment membrane. Its function is as follows. Metallophosphoesterase that catalyzes the removal of a side-chain ethanolamine-phosphate (EtNP) from the second mannose of the GPI-anchor protein intermediate. Participates in the glycan remodeling steps of GPI-anchor maturation to allow an efficient transport of GPI-anchor proteins from the endoplasmic reticulum to the Golgi. This Mus musculus (Mouse) protein is Metallophosphoesterase 1.